The following is a 219-amino-acid chain: Urease accessory protein UreG (219 aa).

Residues 1 to 20 are disordered; that stretch reads MSALHSIPHRSKKLPPLRVG. 23–30 contributes to the GTP binding site; the sequence is GPVGSGKT.

The protein belongs to the SIMIBI class G3E GTPase family. UreG subfamily. As to quaternary structure, homodimer. UreD, UreF and UreG form a complex that acts as a GTP-hydrolysis-dependent molecular chaperone, activating the urease apoprotein by helping to assemble the nickel containing metallocenter of UreC. The UreE protein probably delivers the nickel.

Its subcellular location is the cytoplasm. Its function is as follows. Facilitates the functional incorporation of the urease nickel metallocenter. This process requires GTP hydrolysis, probably effectuated by UreG. The chain is Urease accessory protein UreG from Methylibium petroleiphilum (strain ATCC BAA-1232 / LMG 22953 / PM1).